The primary structure comprises 327 residues: Guanine nucleotide-binding protein subunit beta-like protein 1 (327 aa).

WD repeat units lie at residues 16–54, 58–97, 103–145, 153–195, 200–237, 242–282, and 286–323; these read LRGT…IWSL, RAVT…LWDL, AVVD…ILEM, ALKP…LWDV, VCSR…VWSL, ALQV…VFHW, and QPLA…LWSL.

In terms of tissue distribution, ubiquitous. Highly expressed in heart, liver, skeletal muscle, kidney, spleen, thymus and pancreas. Detected at low levels in lung, placenta and brain.

It is found in the cytoplasm. It localises to the nucleus. Its function is as follows. Acts as a critical regulator of DNA damage response (DDR) signaling via specifically regulating phosphatidylinositol 3-kinase-related protein kinase (PIKK) family proteins. The sequence is that of Guanine nucleotide-binding protein subunit beta-like protein 1 from Homo sapiens (Human).